A 1019-amino-acid polypeptide reads, in one-letter code: Insulin-degrading enzyme (1019 aa).

His108 is a binding site for Zn(2+). The active-site Proton acceptor is Glu111. The Zn(2+) site is built by His112 and Glu189. Lys192 is subject to N6-succinyllysine. Residues 336–342 (HLIGHEG) and 359–363 (LVGGQ) each bind substrate. ATP is bound at residue Arg429. The residue at position 697 (Lys697) is an N6-succinyllysine. The SlyX motif motif lies at 853 to 858 (EKPPHY). 895–901 (DKPKKLS) contributes to the ATP binding site.

The protein belongs to the peptidase M16 family. In terms of assembly, homodimer. Can also form homotetramers. (Microbial infection) Interacts (via N-terminus) with varicella-zoster virus (VZV) envelope glycoprotein E (via N-terminus); the membrane-associated isoform may function as an entry receptor for this virus. It depends on Zn(2+) as a cofactor. The N-terminus is blocked. As to expression, detected in brain and in cerebrospinal fluid (at protein level).

The protein resides in the cytoplasm. It localises to the cytosol. It is found in the cell membrane. Its subcellular location is the secreted. It catalyses the reaction Degradation of insulin, glucagon and other polypeptides. No action on proteins.. With respect to regulation, activated by small peptides. Activated by ATP and GTP, and to a lesser extent by CTP, TTP and PPPi. Inhibited by bacitracin. In vitro modification of Cys residues impairs enzyme activity. Functionally, plays a role in the cellular breakdown of insulin, APP peptides, IAPP peptides, natriuretic peptides, glucagon, bradykinin, kallidin, and other peptides, and thereby plays a role in intercellular peptide signaling. Substrate binding induces important conformation changes, making it possible to bind and degrade larger substrates, such as insulin. Contributes to the regulation of peptide hormone signaling cascades and regulation of blood glucose homeostasis via its role in the degradation of insulin, glucagon and IAPP. Plays a role in the degradation and clearance of APP-derived amyloidogenic peptides that are secreted by neurons and microglia. Degrades the natriuretic peptides ANP, BNP and CNP, inactivating their ability to raise intracellular cGMP. Also degrades an aberrant frameshifted 40-residue form of NPPA (fsNPPA) which is associated with familial atrial fibrillation in heterozygous patients. Involved in antigen processing. Produces both the N terminus and the C terminus of MAGEA3-derived antigenic peptide (EVDPIGHLY) that is presented to cytotoxic T lymphocytes by MHC class I. Its function is as follows. (Microbial infection) The membrane-associated isoform acts as an entry receptor for varicella-zoster virus (VZV). The polypeptide is Insulin-degrading enzyme (Homo sapiens (Human)).